Reading from the N-terminus, the 135-residue chain is NNCPLDWLPMNGLCYKIFNQLKTWEDAEMFCRKYKPGCHLASFHRYGESLEIAEYISDYHKGQENVWIGLRDKKKDFSWEWTDRSCTDYLTWDKNQPDHYQNKEFCVELVSLTGYRLWNDQVCESKDAFLCQCKF.

4 disulfide bridges follow: Cys3–Cys14, Cys31–Cys131, Cys38–Cys133, and Cys106–Cys123. One can recognise a C-type lectin domain in the interval 10 to 132 (MNGLCYKIFN…CESKDAFLCQ (123 aa)). Residues Gln96, Asp98, Glu104, Asn119, and Asp120 each contribute to the Ca(2+) site. The Galactose-binding signature appears at 96–98 (QPD).

Belongs to the true venom lectin family. Homodecamer of disulfide-linked dimers arranged in two pseudo-5-fold symmetric pentamers. As to expression, expressed by the venom gland.

It is found in the secreted. Galactose-binding protein which recognizes specific carbohydrate structures and agglutinates a variety of animal cells by binding to cell-surface glycoproteins and glycolipids. Calcium-dependent lectin. Shows high hemagglutinating activity (MHC=10 ng/ml). The sequence is that of C-type lectin Cal from Crotalus atrox (Western diamondback rattlesnake).